We begin with the raw amino-acid sequence, 86 residues long: Small ribosomal subunit protein uS15 (86 aa).

This sequence belongs to the universal ribosomal protein uS15 family. Part of the 30S ribosomal subunit. Forms a bridge to the 50S subunit in the 70S ribosome, contacting the 23S rRNA.

One of the primary rRNA binding proteins, it binds directly to 16S rRNA where it helps nucleate assembly of the platform of the 30S subunit by binding and bridging several RNA helices of the 16S rRNA. Functionally, forms an intersubunit bridge (bridge B4) with the 23S rRNA of the 50S subunit in the ribosome. The protein is Small ribosomal subunit protein uS15 of Neorickettsia sennetsu (strain ATCC VR-367 / Miyayama) (Ehrlichia sennetsu).